The chain runs to 433 residues: NADH-quinone oxidoreductase subunit D (433 aa).

It belongs to the complex I 49 kDa subunit family. In terms of assembly, NDH-1 is composed of 14 different subunits. Subunits NuoB, C, D, E, F, and G constitute the peripheral sector of the complex.

It localises to the cell membrane. It catalyses the reaction a quinone + NADH + 5 H(+)(in) = a quinol + NAD(+) + 4 H(+)(out). In terms of biological role, NDH-1 shuttles electrons from NADH, via FMN and iron-sulfur (Fe-S) centers, to quinones in the respiratory chain. The immediate electron acceptor for the enzyme in this species is believed to be a menaquinone. Couples the redox reaction to proton translocation (for every two electrons transferred, four hydrogen ions are translocated across the cytoplasmic membrane), and thus conserves the redox energy in a proton gradient. The polypeptide is NADH-quinone oxidoreductase subunit D (Cutibacterium acnes (strain DSM 16379 / KPA171202) (Propionibacterium acnes)).